Here is a 132-residue protein sequence, read N- to C-terminus: Acetylcholinesterase (132 aa).

N37 is a glycosylation site (N-linked (GlcNAc...) asparagine). C45 and C72 form a disulfide bridge.

Belongs to the type-B carboxylesterase/lipase family.

It is found in the synapse. The protein resides in the secreted. The protein localises to the cell membrane. The catalysed reaction is acetylcholine + H2O = choline + acetate + H(+). In terms of biological role, rapidly hydrolyzes choline released into the synapse. This Culex pipiens pipiens (Northern house mosquito) protein is Acetylcholinesterase (ACE-1).